Here is a 32-residue protein sequence, read N- to C-terminus: MEALVYTFLLVATLGIIFFAIFFRDPPKVPNK.

Residues 3–23 (ALVYTFLLVATLGIIFFAIFF) traverse the membrane as a helical segment.

Belongs to the PsbT family. PSII is composed of 1 copy each of membrane proteins PsbA, PsbB, PsbC, PsbD, PsbE, PsbF, PsbH, PsbI, PsbJ, PsbK, PsbL, PsbM, PsbT, PsbY, PsbZ, Psb30/Ycf12, at least 3 peripheral proteins of the oxygen-evolving complex and a large number of cofactors. It forms dimeric complexes.

Its subcellular location is the plastid. It localises to the chloroplast thylakoid membrane. In terms of biological role, found at the monomer-monomer interface of the photosystem II (PS II) dimer, plays a role in assembly and dimerization of PSII. PSII is a light-driven water plastoquinone oxidoreductase, using light energy to abstract electrons from H(2)O, generating a proton gradient subsequently used for ATP formation. The sequence is that of Photosystem II reaction center protein T from Psilotum nudum (Whisk fern).